A 35-amino-acid polypeptide reads, in one-letter code: Unknown protein 14 from 2D-PAGE (35 aa).

Residues 1–35 (VVXXQTLXDXRGIYGDQGSIGPXXIXGLQGDRDAD) are disordered.

This Bombyx mori (Silk moth) protein is Unknown protein 14 from 2D-PAGE.